Reading from the N-terminus, the 221-residue chain is Kinetochore protein Spc25 (221 aa).

A coiled-coil region spans residues 63-114 (VIQRREEMEKRVSFMEELAQEVEATKQRNLVMREQIKQQKMLVRQRKNEIME).

Belongs to the SPC25 family. In terms of assembly, component of the Ndc80 complex, which is composed of Ndc80, Nuf2 and Spc25.

It is found in the nucleus. Its subcellular location is the chromosome. The protein localises to the centromere. It localises to the kinetochore. Acts as a component of the essential kinetochore-associated Ndc80 complex, which is required for chromosome segregation and spindle checkpoint activity during meiosis and mitosis. Required for kinetochore integrity and the organization of stable microtubule binding sites in the outer plate of the kinetochore. Participates in SAC signaling that responds specifically to disruptions in spindle microtubule dynamics. The NDC80 complex synergistically enhances the affinity of the SKA1 complex for microtubules and may allow the NDC80 complex to track depolymerizing microtubules. The chain is Kinetochore protein Spc25 from Drosophila eugracilis (Fruit fly).